The chain runs to 485 residues: Regulatory protein ViaA (485 aa).

This sequence belongs to the ViaA family. As to quaternary structure, homodimer. Interacts with RavA.

The protein resides in the cytoplasm. In terms of biological role, component of the RavA-ViaA chaperone complex, which may act on the membrane to optimize the function of some of the respiratory chains. ViaA stimulates the ATPase activity of RavA. The protein is Regulatory protein ViaA of Photorhabdus laumondii subsp. laumondii (strain DSM 15139 / CIP 105565 / TT01) (Photorhabdus luminescens subsp. laumondii).